A 607-amino-acid chain; its full sequence is DNA mismatch repair protein MutL (607 aa).

Belongs to the DNA mismatch repair MutL/HexB family.

Its function is as follows. This protein is involved in the repair of mismatches in DNA. It is required for dam-dependent methyl-directed DNA mismatch repair. May act as a 'molecular matchmaker', a protein that promotes the formation of a stable complex between two or more DNA-binding proteins in an ATP-dependent manner without itself being part of a final effector complex. The protein is DNA mismatch repair protein MutL of Paramagnetospirillum magneticum (strain ATCC 700264 / AMB-1) (Magnetospirillum magneticum).